A 227-amino-acid chain; its full sequence is Ribonuclease 3 (227 aa).

Residues 4–126 (LDRLERKIGY…IIGAMSLDQG (123 aa)) form the RNase III domain. Glu39 lines the Mg(2+) pocket. Asp43 is an active-site residue. The Mg(2+) site is built by Asp112 and Glu115. Glu115 is a catalytic residue. In terms of domain architecture, DRBM spans 153-226 (DAKTRLQEYL…AEQILKELDI (74 aa)).

Belongs to the ribonuclease III family. Homodimer. Mg(2+) serves as cofactor.

Its subcellular location is the cytoplasm. The enzyme catalyses Endonucleolytic cleavage to 5'-phosphomonoester.. Its function is as follows. Digests double-stranded RNA. Involved in the processing of primary rRNA transcript to yield the immediate precursors to the large and small rRNAs (23S and 16S). Processes some mRNAs, and tRNAs when they are encoded in the rRNA operon. Processes pre-crRNA and tracrRNA of type II CRISPR loci if present in the organism. This chain is Ribonuclease 3, found in Haemophilus influenzae (strain 86-028NP).